The following is a 194-amino-acid chain: dCTP deaminase (194 aa).

DCTP contacts are provided by residues 110–115, aspartate 128, 136–138, tyrosine 171, lysine 178, and glutamine 182; these read RSSLAR and VLE. Glutamate 138 acts as the Proton donor/acceptor in catalysis. Residues 174-194 are disordered; sequence RKSSKYKDQQEAVASRISQDK.

This sequence belongs to the dCTP deaminase family. Homotrimer.

It catalyses the reaction dCTP + H2O + H(+) = dUTP + NH4(+). Its pathway is pyrimidine metabolism; dUMP biosynthesis; dUMP from dCTP (dUTP route): step 1/2. Catalyzes the deamination of dCTP to dUTP. This chain is dCTP deaminase, found in Shewanella frigidimarina (strain NCIMB 400).